The sequence spans 94 residues: Co-chaperonin GroES (94 aa).

Belongs to the GroES chaperonin family. In terms of assembly, heptamer of 7 subunits arranged in a ring. Interacts with the chaperonin GroEL.

The protein resides in the cytoplasm. In terms of biological role, together with the chaperonin GroEL, plays an essential role in assisting protein folding. The GroEL-GroES system forms a nano-cage that allows encapsulation of the non-native substrate proteins and provides a physical environment optimized to promote and accelerate protein folding. GroES binds to the apical surface of the GroEL ring, thereby capping the opening of the GroEL channel. The protein is Co-chaperonin GroES of Streptococcus equinus (Streptococcus bovis).